Consider the following 170-residue polypeptide: Large ribosomal subunit protein uL11 (170 aa).

The protein belongs to the universal ribosomal protein uL11 family. As to quaternary structure, part of the ribosomal stalk of the 50S ribosomal subunit. Interacts with L10 and the large rRNA to form the base of the stalk. L10 forms an elongated spine to which L12 dimers bind in a sequential fashion forming a multimeric L10(L12)X complex.

In terms of biological role, forms part of the ribosomal stalk which helps the ribosome interact with GTP-bound translation factors. This Desulfurococcus amylolyticus (strain DSM 18924 / JCM 16383 / VKM B-2413 / 1221n) (Desulfurococcus kamchatkensis) protein is Large ribosomal subunit protein uL11.